The primary structure comprises 32 residues: IRRYCDPRVCDRECLEKGKYFGRCIRDICKCN.

Intrachain disulfides connect Cys5/Cys24, Cys10/Cys29, and Cys14/Cys31.

This sequence belongs to the short scorpion toxin superfamily. Potassium channel inhibitor family. Alpha-KTx 10 subfamily. As to expression, expressed by the venom gland.

It is found in the secreted. In Centruroides tecomanus (Scorpion), this protein is Peptide II.10.10.